A 183-amino-acid chain; its full sequence is UPF0397 protein PBPRA2239 (183 aa).

5 helical membrane-spanning segments follow: residues 8–28 (VVLI…MFGI), 41–61 (AVLA…VGFI), 69–89 (FAGW…GLII), 110–130 (FALF…CSAY), and 147–167 (LIII…YILT).

The protein belongs to the UPF0397 family.

It localises to the cell membrane. This Photobacterium profundum (strain SS9) protein is UPF0397 protein PBPRA2239.